A 55-amino-acid chain; its full sequence is U17-myrmicitoxin-Mri1b (55 aa).

The first 31 residues, 1-31, serve as a signal peptide directing secretion; that stretch reads MENSRTSTFTAYVTVAFLLISTFVTMVVTES. Q32 carries the post-translational modification Pyrrolidone carboxylic acid.

In terms of processing, contains 1 disulfide bond. In terms of tissue distribution, expressed by the venom gland.

Its subcellular location is the secreted. The sequence is that of U17-myrmicitoxin-Mri1b from Manica rubida (European giant red ant).